Here is a 37-residue protein sequence, read N- to C-terminus: Cytochrome b6-f complex subunit 5 (37 aa).

Residues 5-25 (LLSGIVLGLIPITLAGLFVTA) form a helical membrane-spanning segment.

Belongs to the PetG family. In terms of assembly, the 4 large subunits of the cytochrome b6-f complex are cytochrome b6, subunit IV (17 kDa polypeptide, PetD), cytochrome f and the Rieske protein, while the 4 small subunits are PetG, PetL, PetM and PetN. The complex functions as a dimer.

It localises to the plastid. The protein resides in the chloroplast thylakoid membrane. Functionally, component of the cytochrome b6-f complex, which mediates electron transfer between photosystem II (PSII) and photosystem I (PSI), cyclic electron flow around PSI, and state transitions. PetG is required for either the stability or assembly of the cytochrome b6-f complex. The sequence is that of Cytochrome b6-f complex subunit 5 from Zygnema circumcarinatum (Green alga).